The primary structure comprises 1053 residues: Carbamoyl phosphate synthase large chain (1053 aa).

The tract at residues 1 to 397 (MPKNTSLKKV…GFKKALRSLD (397 aa)) is carboxyphosphate synthetic domain. Residues Arg127, Arg167, Gly173, Gly174, Glu206, Val208, Glu213, Gly239, Val240, His241, Gln282, and Glu294 each contribute to the ATP site. Residues 131–323 (KKLMLEIGEP…IARVAAKVAI (193 aa)) enclose the ATP-grasp 1 domain. The Mg(2+) site is built by Gln282, Glu294, and Asn296. Mn(2+) contacts are provided by Gln282, Glu294, and Asn296. Residues 398-530 (TDIYRHTDLN…YSTWEQECEL (133 aa)) are oligomerization domain. Positions 531–919 (TQSDRKKILI…YKASQAADNT (389 aa)) are carbamoyl phosphate synthetic domain. The ATP-grasp 2 domain occupies 661 to 852 (SVLLDQNNIP…LAKIAAKLML (192 aa)). Positions 697, 736, 738, 743, 768, 769, 770, 771, 811, and 823 each coordinate ATP. Positions 811, 823, and 825 each coordinate Mg(2+). Mn(2+) contacts are provided by Gln811, Glu823, and Asn825. The MGS-like domain maps to 918–1053 (NTIPLKGNVF…TVEPLSHYHS (136 aa)). The segment at 920-1053 (IPLKGNVFIS…TVEPLSHYHS (134 aa)) is allosteric domain.

The protein belongs to the CarB family. In terms of assembly, composed of two chains; the small (or glutamine) chain promotes the hydrolysis of glutamine to ammonia, which is used by the large (or ammonia) chain to synthesize carbamoyl phosphate. Tetramer of heterodimers (alpha,beta)4. Requires Mg(2+) as cofactor. Mn(2+) serves as cofactor.

It carries out the reaction hydrogencarbonate + L-glutamine + 2 ATP + H2O = carbamoyl phosphate + L-glutamate + 2 ADP + phosphate + 2 H(+). The enzyme catalyses hydrogencarbonate + NH4(+) + 2 ATP = carbamoyl phosphate + 2 ADP + phosphate + 2 H(+). Its pathway is amino-acid biosynthesis; L-arginine biosynthesis; carbamoyl phosphate from bicarbonate: step 1/1. The protein operates within pyrimidine metabolism; UMP biosynthesis via de novo pathway; (S)-dihydroorotate from bicarbonate: step 1/3. Large subunit of the glutamine-dependent carbamoyl phosphate synthetase (CPSase). CPSase catalyzes the formation of carbamoyl phosphate from the ammonia moiety of glutamine, carbonate, and phosphate donated by ATP, constituting the first step of 2 biosynthetic pathways, one leading to arginine and/or urea and the other to pyrimidine nucleotides. The large subunit (synthetase) binds the substrates ammonia (free or transferred from glutamine from the small subunit), hydrogencarbonate and ATP and carries out an ATP-coupled ligase reaction, activating hydrogencarbonate by forming carboxy phosphate which reacts with ammonia to form carbamoyl phosphate. This is Carbamoyl phosphate synthase large chain from Methanocorpusculum labreanum (strain ATCC 43576 / DSM 4855 / Z).